A 305-amino-acid chain; its full sequence is Putative lipid kinase SAB0675c (305 aa).

Residues 3–139 (NKYTHGVLFY…YDVIKINNQY (137 aa)) form the DAGKc domain. Residues Ser-44, 74–80 (GDGTVNE), and Thr-101 contribute to the ATP site. Ser-220, Asp-223, and Glu-225 together coordinate Mg(2+). Residue Glu-281 is the Proton acceptor of the active site.

This sequence belongs to the diacylglycerol/lipid kinase family. It depends on Mg(2+) as a cofactor.

May catalyze the ATP-dependent phosphorylation of lipids other than diacylglycerol (DAG). The chain is Putative lipid kinase SAB0675c from Staphylococcus aureus (strain bovine RF122 / ET3-1).